The following is a 217-amino-acid chain: Small ribosomal subunit protein uS3c (217 aa).

In terms of domain architecture, KH type-2 spans 39–109 (IRNFLRTKLI…RFRITITYIP (71 aa)).

It belongs to the universal ribosomal protein uS3 family. In terms of assembly, part of the 30S ribosomal subunit.

It is found in the plastid. The protein resides in the chloroplast. The protein is Small ribosomal subunit protein uS3c (rps3) of Chlorokybus atmophyticus (Soil alga).